The primary structure comprises 354 residues: DNA polymerase IV (354 aa).

One can recognise a UmuC domain in the interval Ile7–Gly188. Residues Asp11 and Asp106 each coordinate Mg(2+). Glu107 is an active-site residue.

The protein belongs to the DNA polymerase type-Y family. As to quaternary structure, monomer. Mg(2+) serves as cofactor.

The protein resides in the cytoplasm. The enzyme catalyses DNA(n) + a 2'-deoxyribonucleoside 5'-triphosphate = DNA(n+1) + diphosphate. Poorly processive, error-prone DNA polymerase involved in untargeted mutagenesis. Copies undamaged DNA at stalled replication forks, which arise in vivo from mismatched or misaligned primer ends. These misaligned primers can be extended by PolIV. Exhibits no 3'-5' exonuclease (proofreading) activity. May be involved in translesional synthesis, in conjunction with the beta clamp from PolIII. This Shigella boydii serotype 18 (strain CDC 3083-94 / BS512) protein is DNA polymerase IV.